Consider the following 247-residue polypeptide: 5-oxoprolinase subunit A (247 aa).

This sequence belongs to the LamB/PxpA family. As to quaternary structure, forms a complex composed of PxpA, PxpB and PxpC.

It carries out the reaction 5-oxo-L-proline + ATP + 2 H2O = L-glutamate + ADP + phosphate + H(+). In terms of biological role, catalyzes the cleavage of 5-oxoproline to form L-glutamate coupled to the hydrolysis of ATP to ADP and inorganic phosphate. This Vibrio vulnificus (strain CMCP6) protein is 5-oxoprolinase subunit A.